Reading from the N-terminus, the 215-residue chain is Chaperone protein TorD (215 aa).

The protein belongs to the TorD/DmsD family. TorD subfamily.

It is found in the cytoplasm. Functionally, involved in the biogenesis of TorA. Acts on TorA before the insertion of the molybdenum cofactor and, as a result, probably favors a conformation of the apoenzyme that is competent for acquiring the cofactor. This is Chaperone protein TorD from Vibrio vulnificus (strain CMCP6).